The primary structure comprises 32 residues: Small ribosomal subunit protein uS19 (32 aa).

It belongs to the universal ribosomal protein uS19 family.

In terms of biological role, protein S19 forms a complex with S13 that binds strongly to the 16S ribosomal RNA. In Yersinia enterocolitica, this protein is Small ribosomal subunit protein uS19 (rpsS).